Consider the following 682-residue polypeptide: DNA-directed RNA polymerase subunit beta' (682 aa).

Cys69, Cys71, Cys87, and Cys90 together coordinate Zn(2+). The Mg(2+) site is built by Asp491, Asp493, and Asp495.

It belongs to the RNA polymerase beta' chain family. RpoC1 subfamily. In plastids the minimal PEP RNA polymerase catalytic core is composed of four subunits: alpha, beta, beta', and beta''. When a (nuclear-encoded) sigma factor is associated with the core the holoenzyme is formed, which can initiate transcription. The cofactor is Mg(2+). Zn(2+) is required as a cofactor.

It is found in the plastid. The protein resides in the chloroplast. The enzyme catalyses RNA(n) + a ribonucleoside 5'-triphosphate = RNA(n+1) + diphosphate. DNA-dependent RNA polymerase catalyzes the transcription of DNA into RNA using the four ribonucleoside triphosphates as substrates. This is DNA-directed RNA polymerase subunit beta' from Lotus japonicus (Lotus corniculatus var. japonicus).